We begin with the raw amino-acid sequence, 936 residues long: Isoleucine--tRNA ligase (936 aa).

The short motif at 58–68 is the 'HIGH' region element; the sequence is PYANGRAHLGT. Glu561 serves as a coordination point for L-isoleucyl-5'-AMP. The 'KMSKS' region signature appears at 602 to 606; sequence KMSKS. Position 605 (Lys605) interacts with ATP. Cys899, Cys902, Cys919, and Cys922 together coordinate Zn(2+).

Belongs to the class-I aminoacyl-tRNA synthetase family. IleS type 1 subfamily. Monomer. The cofactor is Zn(2+).

The protein localises to the cytoplasm. The catalysed reaction is tRNA(Ile) + L-isoleucine + ATP = L-isoleucyl-tRNA(Ile) + AMP + diphosphate. Catalyzes the attachment of isoleucine to tRNA(Ile). As IleRS can inadvertently accommodate and process structurally similar amino acids such as valine, to avoid such errors it has two additional distinct tRNA(Ile)-dependent editing activities. One activity is designated as 'pretransfer' editing and involves the hydrolysis of activated Val-AMP. The other activity is designated 'posttransfer' editing and involves deacylation of mischarged Val-tRNA(Ile). The polypeptide is Isoleucine--tRNA ligase (Coxiella burnetii (strain CbuK_Q154) (Coxiella burnetii (strain Q154))).